We begin with the raw amino-acid sequence, 133 residues long: L-ectoine synthase (133 aa).

This sequence belongs to the ectoine synthase family.

It carries out the reaction (2S)-4-acetamido-2-aminobutanoate = L-ectoine + H2O. The protein operates within amine and polyamine biosynthesis; ectoine biosynthesis; L-ectoine from L-aspartate 4-semialdehyde: step 3/3. Functionally, catalyzes the circularization of gamma-N-acetyl-alpha,gamma-diaminobutyric acid (ADABA) to ectoine (1,4,5,6-tetrahydro-2-methyl-4-pyrimidine carboxylic acid), which is an excellent osmoprotectant. The sequence is that of L-ectoine synthase from Bordetella petrii (strain ATCC BAA-461 / DSM 12804 / CCUG 43448).